The sequence spans 191 residues: Outer membrane lipoprotein DolP (191 aa).

A signal peptide spans 1–18; the sequence is MKAFSPLAVLISALLLQG. Cys19 carries the N-palmitoyl cysteine lipid modification. Cys19 carries S-diacylglycerol cysteine lipidation. BON domains are found at residues 46–115 and 124–191; these read DDGT…RQGQ and NDTW…TYIK.

The protein belongs to the lipoprotein DolP family.

The protein resides in the cell outer membrane. In terms of biological role, plays an important role in maintaining outer membrane integrity. Contributes to virulence. This Salmonella typhimurium (strain LT2 / SGSC1412 / ATCC 700720) protein is Outer membrane lipoprotein DolP.